Reading from the N-terminus, the 391-residue chain is Pectin acetylesterase 11 (391 aa).

Positions 1–23 (MTWLKQMWSSILVLAVVVIGARA) are cleaved as a signal peptide. Active-site charge relay system residues include Ser-171, Asp-267, and His-334.

This sequence belongs to the pectinacetylesterase family.

It localises to the secreted. Its subcellular location is the cell wall. Its function is as follows. Hydrolyzes acetyl esters in homogalacturonan regions of pectin. In type I primary cell wall, galacturonic acid residues of pectin can be acetylated at the O-2 and O-3 positions. Decreasing the degree of acetylation of pectin gels in vitro alters their physical properties. The sequence is that of Pectin acetylesterase 11 from Arabidopsis thaliana (Mouse-ear cress).